Consider the following 486-residue polypeptide: Argininosuccinate lyase (486 aa).

Belongs to the lyase 1 family. Argininosuccinate lyase subfamily.

The protein resides in the cytoplasm. The enzyme catalyses 2-(N(omega)-L-arginino)succinate = fumarate + L-arginine. It participates in amino-acid biosynthesis; L-arginine biosynthesis; L-arginine from L-ornithine and carbamoyl phosphate: step 3/3. This Acidobacterium capsulatum (strain ATCC 51196 / DSM 11244 / BCRC 80197 / JCM 7670 / NBRC 15755 / NCIMB 13165 / 161) protein is Argininosuccinate lyase.